Reading from the N-terminus, the 115-residue chain is Photosystem II reaction center Psb28 protein (115 aa).

The protein belongs to the Psb28 family. As to quaternary structure, part of the photosystem II complex.

It is found in the plastid. Its subcellular location is the chloroplast thylakoid membrane. The chain is Photosystem II reaction center Psb28 protein from Cyanidium caldarium (Red alga).